A 520-amino-acid chain; its full sequence is 2-isopropylmalate synthase (520 aa).

Positions 5-267 (VIIFDTTLRD…HTNINHQEIY (263 aa)) constitute a Pyruvate carboxyltransferase domain. Asp14, His202, His204, and Asn238 together coordinate Mn(2+). The segment at 392–520 (RLDYFSVQSG…RLQQNNQEMV (129 aa)) is regulatory domain.

It belongs to the alpha-IPM synthase/homocitrate synthase family. LeuA type 1 subfamily. In terms of assembly, homodimer. Mn(2+) is required as a cofactor.

The protein localises to the cytoplasm. It catalyses the reaction 3-methyl-2-oxobutanoate + acetyl-CoA + H2O = (2S)-2-isopropylmalate + CoA + H(+). It functions in the pathway amino-acid biosynthesis; L-leucine biosynthesis; L-leucine from 3-methyl-2-oxobutanoate: step 1/4. Its function is as follows. Catalyzes the condensation of the acetyl group of acetyl-CoA with 3-methyl-2-oxobutanoate (2-ketoisovalerate) to form 3-carboxy-3-hydroxy-4-methylpentanoate (2-isopropylmalate). The protein is 2-isopropylmalate synthase of Yersinia enterocolitica serotype O:8 / biotype 1B (strain NCTC 13174 / 8081).